Here is a 226-residue protein sequence, read N- to C-terminus: ATP-dependent dethiobiotin synthetase BioD (226 aa).

13-18 serves as a coordination point for ATP; the sequence is DVGKTV. Residue T17 coordinates Mg(2+). Residue K38 is part of the active site. ATP-binding positions include D55, 116-119, and 176-177; these read EGAG and NR. Residues D55 and E116 each coordinate Mg(2+).

Belongs to the dethiobiotin synthetase family. In terms of assembly, homodimer. It depends on Mg(2+) as a cofactor.

The protein resides in the cytoplasm. The enzyme catalyses (7R,8S)-7,8-diammoniononanoate + CO2 + ATP = (4R,5S)-dethiobiotin + ADP + phosphate + 3 H(+). The protein operates within cofactor biosynthesis; biotin biosynthesis; biotin from 7,8-diaminononanoate: step 1/2. In terms of biological role, catalyzes a mechanistically unusual reaction, the ATP-dependent insertion of CO2 between the N7 and N8 nitrogen atoms of 7,8-diaminopelargonic acid (DAPA, also called 7,8-diammoniononanoate) to form a ureido ring. In Aliivibrio fischeri (strain MJ11) (Vibrio fischeri), this protein is ATP-dependent dethiobiotin synthetase BioD.